We begin with the raw amino-acid sequence, 109 residues long: Nascent polypeptide-associated complex protein (109 aa).

The NAC-A/B domain occupies 3-70 (PMNPKQMKKM…YEVVKRPPKI (68 aa)).

The protein belongs to the NAC-alpha family. As to quaternary structure, homodimer. Interacts with the ribosome. Binds ribosomal RNA.

Functionally, contacts the emerging nascent chain on the ribosome. The protein is Nascent polypeptide-associated complex protein of Archaeoglobus fulgidus (strain ATCC 49558 / DSM 4304 / JCM 9628 / NBRC 100126 / VC-16).